Reading from the N-terminus, the 784-residue chain is Cation/H(+) antiporter 26 (784 aa).

11 consecutive transmembrane segments (helical) span residues proline 38 to leucine 58, leucine 61 to leucine 81, tyrosine 97 to alanine 117, leucine 130 to cysteine 150, leucine 201 to isoleucine 221, phenylalanine 240 to isoleucine 260, threonine 286 to valine 306, isoleucine 321 to valine 341, isoleucine 351 to leucine 371, phenylalanine 376 to tyrosine 396, and glutamate 413 to valine 433.

It belongs to the monovalent cation:proton antiporter 2 (CPA2) transporter (TC 2.A.37) family. CHX (TC 2.A.37.4) subfamily. As to expression, expressed in pollen.

It localises to the membrane. Its function is as follows. May operate as a cation/H(+) antiporter. This chain is Cation/H(+) antiporter 26 (CHX26), found in Arabidopsis thaliana (Mouse-ear cress).